Here is a 284-residue protein sequence, read N- to C-terminus: 4-diphosphocytidyl-2-C-methyl-D-erythritol kinase (284 aa).

The active site involves Lys9. 90-100 (PLVSGLGGDSS) lines the ATP pocket. Residue Asp132 is part of the active site.

This sequence belongs to the GHMP kinase family. IspE subfamily.

The catalysed reaction is 4-CDP-2-C-methyl-D-erythritol + ATP = 4-CDP-2-C-methyl-D-erythritol 2-phosphate + ADP + H(+). It functions in the pathway isoprenoid biosynthesis; isopentenyl diphosphate biosynthesis via DXP pathway; isopentenyl diphosphate from 1-deoxy-D-xylulose 5-phosphate: step 3/6. Its function is as follows. Catalyzes the phosphorylation of the position 2 hydroxy group of 4-diphosphocytidyl-2C-methyl-D-erythritol. In Dehalococcoides mccartyi (strain ATCC BAA-2266 / KCTC 15142 / 195) (Dehalococcoides ethenogenes (strain 195)), this protein is 4-diphosphocytidyl-2-C-methyl-D-erythritol kinase.